A 75-amino-acid chain; its full sequence is Carwaprin-b (75 aa).

The first 24 residues, 1–24 (MSSGGLLLLLGLLTLWAELTPVSS), serve as a signal peptide directing secretion. Positions 27-72 (RPKKPGLCPPRPQKPPCVRECKNDWRCPGEQKCCRYGCIYECRDPI) constitute a WAP domain. 4 cysteine pairs are disulfide-bonded: Cys34-Cys60, Cys43-Cys64, Cys47-Cys59, and Cys53-Cys68.

Belongs to the venom waprin family. In terms of tissue distribution, expressed by the venom gland.

The protein localises to the secreted. Functionally, damages membranes of susceptible bacteria. Has no hemolytic activity. Not toxic to mice. Does not inhibit the proteinases elastase and cathepsin G. The chain is Carwaprin-b from Tropidechis carinatus (Australian rough-scaled snake).